The primary structure comprises 156 residues: Arginine repressor (156 aa).

The protein belongs to the ArgR family.

The protein localises to the cytoplasm. It participates in amino-acid biosynthesis; L-arginine biosynthesis [regulation]. Functionally, regulates arginine biosynthesis genes. This is Arginine repressor from Vibrio atlanticus (strain LGP32) (Vibrio splendidus (strain Mel32)).